The sequence spans 464 residues: RYamide receptor (464 aa).

The Extracellular portion of the chain corresponds to 1–105; sequence MEHHNSHLLP…EDMWSSAYFK (105 aa). Asn-49, Asn-79, and Asn-85 each carry an N-linked (GlcNAc...) asparagine glycan. Residues 106–126 form a helical membrane-spanning segment; that stretch reads IIVYMLYIPIFIFALIGNGTV. Topologically, residues 127–148 are cytoplasmic; it reads CYIVYSTPRMRTVTNYFIASLA. The helical transmembrane segment at 149 to 169 threads the bilayer; the sequence is IGDILMSFFCVPSSFISLFIL. Residues 170-189 lie on the Extracellular side of the membrane; sequence NYWPFGLALCHFVNYSQAVS. A glycan (N-linked (GlcNAc...) asparagine) is linked at Asn-183. The helical transmembrane segment at 190–210 threads the bilayer; sequence VLVSAYTLVAISIDRYIAIMW. Topologically, residues 211–221 are cytoplasmic; the sequence is PLKPRITKRYA. A helical membrane pass occupies residues 222–242; it reads TFIIAGVWFIALATALPIPIV. Residues 243-274 are Extracellular-facing; that stretch reads SGLDIPMSPWHTKCEKYICREMWPSRTQEYYY. The chain crosses the membrane as a helical span at residues 275–295; the sequence is TLSLFALQFVVPLGVLIFTYA. The Cytoplasmic portion of the chain corresponds to 296–329; the sequence is RITIRVWAKRPPGEAETNRDQRMARSKRKMVKMM. A helical membrane pass occupies residues 330-350; that stretch reads LTVVIVFTCCWLPFNILQLLL. Residues 351 to 363 are Extracellular-facing; that stretch reads NDEEFAHWDPLPY. Residues 364–384 form a helical membrane-spanning segment; sequence VWFAFHWLAMSHCCYNPIIYC. The Cytoplasmic portion of the chain corresponds to 385–464; it reads YMNARFRSGF…LSCGETSPLR (80 aa).

The protein belongs to the G-protein coupled receptor 1 family.

Its subcellular location is the cell membrane. Its function is as follows. Receptor for the neuropeptides RYamide-1 and RYamide-2. The activity of this receptor is mediated by G proteins which activate a phosphatidyl-inositol-calcium second messenger system. RYamide signaling may suppress feeding behavior. The polypeptide is RYamide receptor (Drosophila melanogaster (Fruit fly)).